The primary structure comprises 280 residues: Ribulose-phosphate 3-epimerase, chloroplastic (280 aa).

A chloroplast-targeting transit peptide spans Ser1 to Ala45. Substrate is bound at residue Ser62. Residues His87, Asp89, and His120 each contribute to the a divalent metal cation site. Asp89 (proton acceptor) is an active-site residue. Residues His120, Gly198 to Gly201, Asp231 to Gly233, and Gly253 to Ser254 each bind substrate. Position 231 (Asp231) interacts with a divalent metal cation. Asp231 functions as the Proton donor in the catalytic mechanism.

The protein belongs to the ribulose-phosphate 3-epimerase family. As to quaternary structure, homohexamer. Co(2+) is required as a cofactor. Fe(2+) serves as cofactor. Requires Mn(2+) as cofactor. It depends on Zn(2+) as a cofactor. As to expression, highest level of expression in leaves, whereas it is low in roots, tubers, and stems.

The protein localises to the plastid. Its subcellular location is the chloroplast thylakoid membrane. It catalyses the reaction D-ribulose 5-phosphate = D-xylulose 5-phosphate. It functions in the pathway carbohydrate biosynthesis; Calvin cycle. Its function is as follows. Catalyzes the reversible epimerization of D-ribulose 5-phosphate to D-xylulose 5-phosphate. This Solanum tuberosum (Potato) protein is Ribulose-phosphate 3-epimerase, chloroplastic.